Reading from the N-terminus, the 145-residue chain is Protein SprT-like (145 aa).

In terms of domain architecture, SprT-like spans 5–140 (DYVREVSLAD…ACGRCHGRLI (136 aa)). Histidine 64 lines the Zn(2+) pocket. Residue glutamate 65 is part of the active site. Histidine 68 is a binding site for Zn(2+).

The protein belongs to the SprT family. Requires Zn(2+) as cofactor.

The protein resides in the cytoplasm. This chain is Protein SprT-like, found in Streptococcus equi subsp. zooepidemicus (strain MGCS10565).